Reading from the N-terminus, the 336-residue chain is Acetyl-coenzyme A carboxylase carboxyl transferase subunit beta (336 aa).

The CoA carboxyltransferase N-terminal domain maps to 27–297; that stretch reads LWTKCESCQG…VAPAPAPAAT (271 aa). Residues cysteine 31, cysteine 34, cysteine 50, and cysteine 53 each coordinate Zn(2+). The C4-type zinc finger occupies 31 to 53; that stretch reads CESCQGILYRPDLERNLEVCPKC. The interval 287-336 is disordered; that stretch reads SVAPAPAPAATVDPEPESAEPEAPAEEAGPAGAAGDQAGESQDEGDPRNA. The segment covering 300 to 311 has biased composition (acidic residues); that stretch reads PEPESAEPEAPA. The span at 312–326 shows a compositional bias: low complexity; that stretch reads EEAGPAGAAGDQAGE.

It belongs to the AccD/PCCB family. In terms of assembly, acetyl-CoA carboxylase is a heterohexamer composed of biotin carboxyl carrier protein (AccB), biotin carboxylase (AccC) and two subunits each of ACCase subunit alpha (AccA) and ACCase subunit beta (AccD). It depends on Zn(2+) as a cofactor.

The protein localises to the cytoplasm. It catalyses the reaction N(6)-carboxybiotinyl-L-lysyl-[protein] + acetyl-CoA = N(6)-biotinyl-L-lysyl-[protein] + malonyl-CoA. It functions in the pathway lipid metabolism; malonyl-CoA biosynthesis; malonyl-CoA from acetyl-CoA: step 1/1. Component of the acetyl coenzyme A carboxylase (ACC) complex. Biotin carboxylase (BC) catalyzes the carboxylation of biotin on its carrier protein (BCCP) and then the CO(2) group is transferred by the transcarboxylase to acetyl-CoA to form malonyl-CoA. The chain is Acetyl-coenzyme A carboxylase carboxyl transferase subunit beta from Halorhodospira halophila (strain DSM 244 / SL1) (Ectothiorhodospira halophila (strain DSM 244 / SL1)).